The primary structure comprises 237 residues: Large ribosomal subunit protein uL1 (237 aa).

Belongs to the universal ribosomal protein uL1 family. Part of the 50S ribosomal subunit.

In terms of biological role, binds directly to 23S rRNA. The L1 stalk is quite mobile in the ribosome, and is involved in E site tRNA release. Functionally, protein L1 is also a translational repressor protein, it controls the translation of the L11 operon by binding to its mRNA. The polypeptide is Large ribosomal subunit protein uL1 (Dehalococcoides mccartyi (strain ATCC BAA-2266 / KCTC 15142 / 195) (Dehalococcoides ethenogenes (strain 195))).